Consider the following 1687-residue polypeptide: MEPAAAAPAQRLADPTGEDQALAAAAAEGGRCPDPALSAAAPSGGNGGAAREEAPCEAPPGPLPGRAGGTGRRRRRGAPQPAAGGAAPVPAAGGGANSLLLKRGRLKRNLSAAAAASSSSSPSSASSAAGGLPASCSASASLCTRSLDRKTLLLKHRQLLQLQPSDRDWVRHQLQRGCVHVFDRHMASSYLRPVLCTLDTTAAEVAARLLQLGHKGGGVVKVLGYGPPPAAAPAASDQTLDGEHGRDVEPPPSSGTVGAVRGPARAPPADLPLPGGAWTRCAPRISPAPSDSSPGELFAGGPGSPPRAPRPASDTESFSLSPSAESVSDRLDPYSSGGGGSSSSSEELEADPAMPHRPGRPAQPRPPSPKTSALLQPKAPTGVDSTGVIAGEGPGDDKAMAAAAPDVPLSTSGRIRETVQKTSPPSLYVQLHGETTRRLEADEKPLQIQNDYLFQLGFGELWRVQEEGMDSEIGCLIRFYAGKPHSTGSSERIQLSGMYNVRKGKMQLPVNRWTRRQVILCGTCLIVSSVKDSVSGKMHVLPLIGGKVEEVKKHQHCLAFSSSGPQSQTYYICFDTFTEYLRWLRQVSKVASQRISSVDLSCCSLEHLPANLFYSQDLTHLNLKQNFLRQTPTLPAARGLGELQRFTKLKSLNLSNNHLGAFPSAVCSIPTLAELNVSCNALREVPAAVGDMQNLQTFLLDGNFLQSLPAELESMHQLSYLGLSFNEFTDIPEVLEKLTAVDKLCMAGNCVETLRLQALRRMPHIKHVDLRLNILRKLMADEVDFVQHVTQLDLRDNKLGDLDAMIFNNIEVLHCERNQLVTLNVCGYFLKALYASSNELAQLDVYPVPNYLSYMDVSRNCLESVPEWVCESRKLEVLDIGHNQICELPARLFCNSSLRKLLAGHNRLARLPERLERTSVEVLDVQHNQITELPPNLLMKADSLRFLNASANKLETLPPATLSEETSSILQELYLTNNCLTDKCVPLLTGHPRLKILHMAYNRLQSFPASKMAKLEELEEIDISGNKLKAIPTTIMNCRRMHTVIAHSNCIEVFPEVMQLPEVKCVDLSCNELSEITLPENLPPKLQELDLTGNPRLALDHKSLELLNNIRCFKIDQPSAGDASGAPAVWSHGYTEASGVKNKLCVAALSVNNFRDNREALYGVFDGDRNVEVPYLLQCTMSDILAEELQKTKNEEEYMVNTFIVMQRKLGTAGQKLGGAAVLCHIKPDPVDLGGSFTLTSANVGKCQTVLCRNGKPLSLSRSYIMSCEEERKRIKQHKAIITEDGKVNGVTESTRILGYTFLHPSVVPRPHVQSVLLTPQDEFFILGSKGLWDSLSIDEAVEAVRNVPDALAAAKKLCTLAQSYGCHDSISAVVVQLSVTEDSFCCCELSAGGSMPPPSPGIFPPSVNMVIKDRPSDGLGVPSSSSGMASEISSELSTSEMSSEVGSTASDEPPSGVLNESSPAYPNEQRCMLHPVCLSNSFQRQLSSATFSSAFSDNGLDSDDEEPIEGVFSNGSRVEVEVDIHCSRAKEKERQQHLLQVPAEASDEGIVISANEDESGLSKKADFSAVGTIGRRRANGSVAPQERSHNVIEVAADAPLRKPGGYFAAPAQPDPDDQFIIPPELEEEVKEIMKHHQEQQQQQQQQQLPPPPQPPQPQPQPQPQPQPQPQRHFQMDHLPDCYDTPL.

Position 1 is an N-acetylmethionine (M1). Disordered stretches follow at residues 1–96 (MEPA…GGGA) and 230–406 (AAAP…AAPD). Low complexity predominate over residues 78 to 96 (APQPAAGGAAPVPAAGGGA). A Phosphoserine modification is found at S286. Residues 314 to 326 (DTESFSLSPSAES) show a composition bias toward polar residues. At S372 the chain carries Phosphoserine. In terms of domain architecture, PH spans 492 to 592 (RIQLSGMYNV…WLRQVSKVAS (101 aa)). LRR repeat units lie at residues 594–615 (RISS…LFYS), 617–638 (DLTH…PAAR), 648–669 (KLKS…VCSI), 671–692 (TLAE…VGDM), 694–715 (NLQT…LESM), 717–739 (QLSY…EKLT), 740–760 (AVDK…QALR), 764–785 (HIKH…EVDF), 788–809 (HVTQ…IFNN), 829–850 (FLKA…PVPN), 851–872 (YLSY…VCES), 874–895 (KLEV…LFCN), 897–918 (SLRK…LERT), 919–940 (SVEV…LLMK), 943–964 (SLRF…TLSE), 969–989 (ILQE…PLLT), 993–1014 (RLKI…KMAK), 1017–1038 (ELEE…IMNC), 1040–1061 (RMHT…MQLP), 1062–1083 (EVKC…ENLP), and 1085–1106 (KLQE…SLEL). The PPM-type phosphatase domain maps to 1131–1378 (SHGYTEASGV…DSISAVVVQL (248 aa)). D1166, G1167, K1330, and D1369 together coordinate Mn(2+). 2 disordered regions span residues 1414–1465 (DRPS…SSPA) and 1604–1687 (PGGY…DTPL). Residues 1424–1445 (SSSSGMASEISSELSTSEMSSE) are compositionally biased toward low complexity. A compositionally biased stretch (pro residues) spans 1649-1669 (LPPPPQPPQPQPQPQPQPQPQ). Residues 1685 to 1687 (TPL) carry the PDZ-binding motif.

As to quaternary structure, interacts with the nucleotide free form of K-Ras (KRAS) via its LRR repeats. Interacts with AKT2, AKT3 and PRKCB. Interacts with WDR48 and USP12. Requires Mn(2+) as cofactor. Isoforms 1 and 2 are expressed in the retina.

It is found in the cytoplasm. The protein resides in the membrane. Its subcellular location is the nucleus. The enzyme catalyses O-phospho-L-seryl-[protein] + H2O = L-seryl-[protein] + phosphate. It carries out the reaction O-phospho-L-threonyl-[protein] + H2O = L-threonyl-[protein] + phosphate. With respect to regulation, insensitive to okadaic acid. Deubiquitination by WDR48-USP12 complex positively regulates PHLPP1 stability. Its function is as follows. Protein phosphatase involved in regulation of Akt and PKC signaling. Mediates dephosphorylation in the C-terminal domain hydrophobic motif of members of the AGC Ser/Thr protein kinase family; specifically acts on 'Ser-473' of AKT2 and AKT3, 'Ser-660' of PRKCB and 'Ser-657' of PRKCA. Isoform 2 seems to have a major role in regulating Akt signaling in hippocampal neurons. Akt regulates the balance between cell survival and apoptosis through a cascade that primarily alters the function of transcription factors that regulate pro- and antiapoptotic genes. Dephosphorylation of 'Ser-473' of Akt triggers apoptosis and suppression of tumor growth. Dephosphorylation of PRKCA and PRKCB leads to their destabilization and degradation. Dephosphorylates STK4 on 'Thr-387' leading to STK4 activation and apoptosis. Dephosphorylates RPS6KB1 and is involved in regulation of cap-dependent translation. Inhibits cancer cell proliferation and may act as a tumor suppressor. Dephosphorylates RAF1 inhibiting its kinase activity. May act as a negative regulator of K-Ras signaling in membrane rafts. Involved in the hippocampus-dependent long-term memory formation. Involved in circadian control by regulating the consolidation of circadian periodicity after resetting. Involved in development and function of regulatory T-cells. In Mus musculus (Mouse), this protein is PH domain leucine-rich repeat-containing protein phosphatase 1 (Phlpp1).